Reading from the N-terminus, the 339-residue chain is DNA-directed RNA polymerase subunit alpha (339 aa).

Positions 1 to 233 (MVREEVAGST…DLFLPFLHAE (233 aa)) are alpha N-terminal domain (alpha-NTD). Positions 266–339 (GIPLNCIFID…MDLLKNKLSF (74 aa)) are alpha C-terminal domain (alpha-CTD).

The protein belongs to the RNA polymerase alpha chain family. In plastids the minimal PEP RNA polymerase catalytic core is composed of four subunits: alpha, beta, beta', and beta''. When a (nuclear-encoded) sigma factor is associated with the core the holoenzyme is formed, which can initiate transcription.

Its subcellular location is the plastid. It is found in the chloroplast. It catalyses the reaction RNA(n) + a ribonucleoside 5'-triphosphate = RNA(n+1) + diphosphate. Its function is as follows. DNA-dependent RNA polymerase catalyzes the transcription of DNA into RNA using the four ribonucleoside triphosphates as substrates. This chain is DNA-directed RNA polymerase subunit alpha, found in Agrostis stolonifera (Creeping bentgrass).